The following is a 451-amino-acid chain: Phosphoglucosamine mutase (451 aa).

Ser103 functions as the Phosphoserine intermediate in the catalytic mechanism. Residues Ser103, Asp243, Asp245, and Asp247 each coordinate Mg(2+). Ser103 carries the phosphoserine modification.

This sequence belongs to the phosphohexose mutase family. Mg(2+) is required as a cofactor. Activated by phosphorylation.

The catalysed reaction is alpha-D-glucosamine 1-phosphate = D-glucosamine 6-phosphate. Catalyzes the conversion of glucosamine-6-phosphate to glucosamine-1-phosphate. The polypeptide is Phosphoglucosamine mutase (Lactiplantibacillus plantarum (strain ATCC BAA-793 / NCIMB 8826 / WCFS1) (Lactobacillus plantarum)).